The primary structure comprises 282 residues: 4-diphosphocytidyl-2-C-methyl-D-erythritol kinase (282 aa).

Residue K9 is part of the active site. Position 98–108 (98–108 (PMGGGLGGGSS)) interacts with ATP. The active site involves D140.

Belongs to the GHMP kinase family. IspE subfamily. As to quaternary structure, homodimer.

The catalysed reaction is 4-CDP-2-C-methyl-D-erythritol + ATP = 4-CDP-2-C-methyl-D-erythritol 2-phosphate + ADP + H(+). It participates in isoprenoid biosynthesis; isopentenyl diphosphate biosynthesis via DXP pathway; isopentenyl diphosphate from 1-deoxy-D-xylulose 5-phosphate: step 3/6. In terms of biological role, catalyzes the phosphorylation of the position 2 hydroxy group of 4-diphosphocytidyl-2C-methyl-D-erythritol. The chain is 4-diphosphocytidyl-2-C-methyl-D-erythritol kinase from Salmonella schwarzengrund (strain CVM19633).